Here is a 293-residue protein sequence, read N- to C-terminus: Cbb3-type cytochrome c oxidase subunit FixP (293 aa).

Positions 1-11 (MSTSHESHHAP) are enriched in basic and acidic residues. Residues 1–25 (MSTSHESHHAPVDGAGGPSTTGHEW) form a disordered region. A helical membrane pass occupies residues 43–63 (FYATIIWAFGYWVAYPAWPLV). Cytochrome c domains follow at residues 114 to 201 (LARA…RSLS) and 209 to 290 (PAAK…HTLG). Positions 127, 130, 131, 178, 222, 225, 226, and 267 each coordinate heme c.

This sequence belongs to the CcoP / FixP family. As to quaternary structure, component of the cbb3-type cytochrome c oxidase at least composed of FixN, FixO, FixQ and FixP. It depends on heme c as a cofactor.

It localises to the cell inner membrane. It participates in energy metabolism; oxidative phosphorylation. In terms of biological role, C-type cytochrome. Part of the cbb3-type cytochrome c oxidase complex. FixP subunit is required for transferring electrons from donor cytochrome c via its heme groups to FixO subunit. From there, electrons are shuttled to the catalytic binuclear center of FixN subunit where oxygen reduction takes place. The complex also functions as a proton pump. The chain is Cbb3-type cytochrome c oxidase subunit FixP from Azorhizobium caulinodans (strain ATCC 43989 / DSM 5975 / JCM 20966 / LMG 6465 / NBRC 14845 / NCIMB 13405 / ORS 571).